The primary structure comprises 1241 residues: RNA polymerase II C-terminal domain phosphatase-like 3 (1241 aa).

Disordered stretches follow at residues 361 to 402 (DHDA…TTEG), 428 to 470 (VFKT…HLIY), 505 to 525 (ISAP…RDPR), 578 to 598 (KRQK…WLED), 677 to 702 (AIQK…VSTP), 720 to 800 (VLQD…QNGT), and 852 to 885 (TERD…GPTR). Residues 368-378 (PSPTRETTPSL) show a composition bias toward polar residues. Residues 441–466 (GEPNDGNGDVGGEVSSSVVKSSNPGS) show a composition bias toward low complexity. Positions 677-686 (AIQKPMDPRR) are enriched in basic and acidic residues. Polar residues-rich tracts occupy residues 691 to 702 (PGSSVQPGVSTP) and 791 to 800 (PRQNISQNGT). The span at 871–881 (SVSAASVTAAA) shows a compositional bias: low complexity. Residues 923–1103 (FASQKLSLVL…GLLGPSLLEL (181 aa)) enclose the FCP1 homology domain. The 94-residue stretch at 1146–1239 (EQRKILAGCR…QRANENLYAI (94 aa)) folds into the BRCT domain.

In terms of assembly, interacts with RAP74. Mg(2+) is required as a cofactor. Co(2+) serves as cofactor. It depends on Mn(2+) as a cofactor.

The protein localises to the nucleus. It carries out the reaction O-phospho-L-seryl-[protein] + H2O = L-seryl-[protein] + phosphate. It catalyses the reaction O-phospho-L-threonyl-[protein] + H2O = L-threonyl-[protein] + phosphate. Completely dephosphorylates 'Ser-2', and partially 'Ser-5' and 'Ser-7' of the heptad repeats YSPTSPS in the C-terminal domain (CTD) of the largest RNA polymerase II subunit (RPB1). Involved in defense response. Acts as a negative regulator of immune gene expression and immunity to pathogen infections. Preferentially dephosphorylates 'Ser-2' of RNA polymerase II CTD. This counterregulates the MAP kinase (MAPK) or cyclin-dependent kinase C (CDKC)-mediated phosphorylation of CTD in response to pathogens and upon perception of microbe-associated molecular patterns (MAMPs). MAPKs phosphorylate and activate CDKCs, which are CTD kinases that positively regulate plant innate immunity. Acts as a negative regulator of stress gene transcription involved in abscisic acid (ABA) mediated signaling pathway and cold resistance. Acts as a post-transcriptional gene silencing (PTGS) suppressor. The polypeptide is RNA polymerase II C-terminal domain phosphatase-like 3 (Arabidopsis thaliana (Mouse-ear cress)).